Here is a 77-residue protein sequence, read N- to C-terminus: Pi-stichotoxin-Hmg5a (77 aa).

The signal sequence occupies residues 1 to 21 (MDYQRLLFLFAVAMVITTTVA). Residues 22–34 (LPQDTALMDGQLQ) constitute a propeptide that is removed on maturation. 3 disulfides stabilise this stretch: cysteine 40–cysteine 73, cysteine 42–cysteine 66, and cysteine 56–cysteine 74.

It belongs to the sea anemone type 3 (BDS) potassium channel toxin family.

The protein resides in the secreted. Its subcellular location is the nematocyst. Toxin that inhibits rat ASIC3 channels (IC(50)=13.8 uM). Also able to bind T.californica muscle-type nicotinic acetylcholine receptors (nAChR), and human alpha-7/CHRNA7 nicotinic acetylcholine receptors. This chain is Pi-stichotoxin-Hmg5a, found in Heteractis magnifica (Magnificent sea anemone).